Consider the following 228-residue polypeptide: Cytochrome c oxidase subunit 2 (228 aa).

Residues 1-26 are Mitochondrial intermembrane-facing; that stretch reads MATWANLGLQDSSSPLMEQLNFFHDH. A helical membrane pass occupies residues 27–48; it reads TLLILTMITILVGYIMGMLSFN. Topologically, residues 49–62 are mitochondrial matrix; it reads KFTNRFLLHGQTIE. Residues 63–82 traverse the membrane as a helical segment; that stretch reads IIWTVLPAIILMFIAFPSLR. The Mitochondrial intermembrane segment spans residues 83–228; it reads LLYLMDEINT…FIKWITSMTN (146 aa). Residues H161, C196, E198, C200, H204, and M207 each contribute to the Cu cation site. E198 contributes to the Mg(2+) binding site.

This sequence belongs to the cytochrome c oxidase subunit 2 family. In terms of assembly, component of the cytochrome c oxidase (complex IV, CIV), a multisubunit enzyme composed of a catalytic core of 3 subunits and several supernumerary subunits. The complex exists as a monomer or a dimer and forms supercomplexes (SCs) in the inner mitochondrial membrane with ubiquinol-cytochrome c oxidoreductase (cytochrome b-c1 complex, complex III, CIII). It depends on Cu cation as a cofactor.

The protein resides in the mitochondrion inner membrane. The catalysed reaction is 4 Fe(II)-[cytochrome c] + O2 + 8 H(+)(in) = 4 Fe(III)-[cytochrome c] + 2 H2O + 4 H(+)(out). Component of the cytochrome c oxidase, the last enzyme in the mitochondrial electron transport chain which drives oxidative phosphorylation. The respiratory chain contains 3 multisubunit complexes succinate dehydrogenase (complex II, CII), ubiquinol-cytochrome c oxidoreductase (cytochrome b-c1 complex, complex III, CIII) and cytochrome c oxidase (complex IV, CIV), that cooperate to transfer electrons derived from NADH and succinate to molecular oxygen, creating an electrochemical gradient over the inner membrane that drives transmembrane transport and the ATP synthase. Cytochrome c oxidase is the component of the respiratory chain that catalyzes the reduction of oxygen to water. Electrons originating from reduced cytochrome c in the intermembrane space (IMS) are transferred via the dinuclear copper A center (CU(A)) of subunit 2 and heme A of subunit 1 to the active site in subunit 1, a binuclear center (BNC) formed by heme A3 and copper B (CU(B)). The BNC reduces molecular oxygen to 2 water molecules using 4 electrons from cytochrome c in the IMS and 4 protons from the mitochondrial matrix. In Anopheles gambiae (African malaria mosquito), this protein is Cytochrome c oxidase subunit 2 (COII).